A 432-amino-acid polypeptide reads, in one-letter code: uncharacterized protein (432 aa).

The protein to M.jannaschii MJ0977.

This is an uncharacterized protein from Methanocaldococcus jannaschii (strain ATCC 43067 / DSM 2661 / JAL-1 / JCM 10045 / NBRC 100440) (Methanococcus jannaschii).